A 553-amino-acid chain; its full sequence is MPTVHLLDYVAGNVRSLVNAINKVGYEVEWVRSPSDLKDVEKLILPGVGHFGHCLSQLSSGGYLQPIREHIASGKPFMGICVGLQSLFESSEEDPNIPGLGTIPARLRKFDAKTKSVPHIGWNSATDTRIDSTGGQTFYGLSPSSKYYYVHSYAAPYEPGILEKDGWLVATASYGEEKFIGAIARDNIFATQFHPEKSGQAGLRTLRAFLDGAQLHSVTLEDSILTGEKNGLTRRIIACLDVRTNDVGDLVVTKGDQYDVREKDGADAGGQVRNLGKPVDMAKKYYEQGADEVTFLNITSFRNCPLADLPMLEILRRTSETVFVPLTIGGGIRDTVDTDGTHIPALDVASMYFKSGADKVSIGSDAVVAAEDYYAAGKVLSGKTAIETISKAYGNQAVVVSVDPKRVYVSQPEDTKHRTIETKFPNAAGQNFCWYQCTIKGGRETRDLDVCQLVQAVEAMGAGEILLNCIDKDGSNSGFDLELINHVKAAVKIPVIASSGAGMPKHFEEVFDQTTTDAALGAGMFHRGEYTVGEVKQYLEDRGFLVRRFEPDV.

The Glutamine amidotransferase type-1 domain maps to Thr3–Ser223. Residues Cys81, His194, and Glu196 each act as for GATase activity in the active site. The tract at residues Leu232–Val553 is cyclase. Catalysis depends on residues Asp241 and Asp403.

This sequence in the C-terminal section; belongs to the HisA/HisF family.

It catalyses the reaction 5-[(5-phospho-1-deoxy-D-ribulos-1-ylimino)methylamino]-1-(5-phospho-beta-D-ribosyl)imidazole-4-carboxamide + L-glutamine = D-erythro-1-(imidazol-4-yl)glycerol 3-phosphate + 5-amino-1-(5-phospho-beta-D-ribosyl)imidazole-4-carboxamide + L-glutamate + H(+). The enzyme catalyses L-glutamine + H2O = L-glutamate + NH4(+). Its pathway is amino-acid biosynthesis; L-histidine biosynthesis; L-histidine from 5-phospho-alpha-D-ribose 1-diphosphate: step 5/9. Functionally, IGPS catalyzes the conversion of PRFAR and glutamine to IGP, AICAR and glutamate. The glutaminase domain produces the ammonia necessary for the cyclase domain to produce IGP and AICAR from PRFAR. The ammonia is channeled to the active site of the cyclase domain. This is Imidazole glycerol phosphate synthase hisHF (hisHF) from Emericella nidulans (strain FGSC A4 / ATCC 38163 / CBS 112.46 / NRRL 194 / M139) (Aspergillus nidulans).